The chain runs to 264 residues: Indolethylamine N-methyltransferase (264 aa).

The residue at position 14 (Lys-14) is an N6-succinyllysine. Residues Tyr-21, Tyr-26, 64–65 (GS), Tyr-70, Asp-86, and Asn-91 each bind S-adenosyl-L-methionine. Position 97 is an N6-succinyllysine (Lys-97). Residues 143 to 144 (DV) and Phe-164 contribute to the S-adenosyl-L-methionine site.

Belongs to the class I-like SAM-binding methyltransferase superfamily. NNMT/PNMT/TEMT family. As to quaternary structure, monomer. In terms of tissue distribution, detected in lung and liver (at protein level).

It is found in the cytoplasm. It carries out the reaction a tertiary amine + S-adenosyl-L-methionine = a methylated tertiary amine + S-adenosyl-L-homocysteine + H(+). The catalysed reaction is a secondary amine + S-adenosyl-L-methionine = a methylated secondary amine + S-adenosyl-L-homocysteine + H(+). The enzyme catalyses a primary amine + S-adenosyl-L-methionine = a methylated primary amine + S-adenosyl-L-homocysteine + H(+). It catalyses the reaction dimethyl sulfide + S-adenosyl-L-methionine = trimethylsulfonium + S-adenosyl-L-homocysteine. Inhibited by the S-adenosyl-L-methionine analog sinefungin and by the product S-adenosyl-L-homocysteine. In terms of biological role, catalyzes the N-methylation of tryptamine and structurally related compounds. Functions as a thioether S-methyltransferase and is active with a variety of thioethers and the corresponding selenium and tellurium compounds, including 3-methylthiopropionaldehyde, dimethyl selenide, dimethyl telluride, 2-methylthioethylamine, 2-methylthioethanol, methyl-n-propyl sulfide and diethyl sulfide. Plays an important role in the detoxification of selenium compounds. The polypeptide is Indolethylamine N-methyltransferase (Inmt) (Mus musculus (Mouse)).